Here is a 41-residue protein sequence, read N- to C-terminus: Large ribosomal subunit protein bL36B (41 aa).

It belongs to the bacterial ribosomal protein bL36 family.

This Vibrio campbellii (strain ATCC BAA-1116) protein is Large ribosomal subunit protein bL36B.